A 721-amino-acid polypeptide reads, in one-letter code: MPRRKKKGKEASGAQNLEKKDAETASSVSVKKKRRIEDGFIVISDSDGEEPKEENGLQKTKIKQSSRAKCLAKRKIAQMTEEEQFALALKMSEQEAREVNSQEEEEEELLRKAIAESLNSCRPSDASATRSRPLATGPSSESHQEKSTDSGTTEGIWQLVPPSLFKGSHISQGNESEEREEPWDHNENTEEEPVSVSSGSWDQSSQPVFENENVKCFDRCTGHLAEHTQCGKPQNECGRGSAFLKAVQGSGDTSRHCLPTLADAKGLQDTGGTVNYFWGIPFCPDGVDPNQYTKVILCQLEVYQKSLKMAQRQLLNKKGFGEPVLPRPPSLIQNECGQGEQASEKNEGISEDMGDEDKEERQESRASVWRAKTKDFQEGPIKTLKEKLLLEEEPTTSHGQSSQGLFVEETSEEGNSVPASQSIAALTGKRSSVLMPESSAEEITVCPETQLSSPETFDLEKEGFPDSRETLYEVSIMADKEVDNREDAKKEIHTSTFSSSTQVSCPLCDQGFPPTKIERHAMYCNGLMGGDTVLTRRQKEAKNKSDNGIAAQTSLDIDKNEKCYLCKSLVPFREYQCHVESCLQLARVDQGDGPEESGRLCLAVDGKRPQQLKNLKEKDRSEGRLISLLEQSEYKTTDAEIKTKFSETGDFRVPSAGVEEAGCSREMQSSLAHLDLNESPIKSFVSVSEAADCLVDFKKQLTARPGSRTRTKAGRGRRRKS.

Positions 1 to 65 (MPRRKKKGKE…GLQKTKIKQS (65 aa)) are disordered. Positions 1 to 101 (MPRRKKKGKE…SEQEAREVNS (101 aa)) are necessary for transcriptional repression. Lys20 is covalently cross-linked (Glycyl lysine isopeptide (Lys-Gly) (interchain with G-Cter in SUMO2)). Ser29 is modified (phosphoserine). Lys31 is covalently cross-linked (Glycyl lysine isopeptide (Lys-Gly) (interchain with G-Cter in SUMO2)). Phosphoserine occurs at positions 44 and 46. Positions 60–78 (TKIKQSSRAKCLAKRKIAQ) match the LR motif motif. Glycyl lysine isopeptide (Lys-Gly) (interchain with G-Cter in SUMO2) cross-links involve residues Lys75 and Lys90. The region spanning 80–99 (TEEEQFALALKMSEQEAREV) is the UIM 1 domain. Positions 93–204 (EQEAREVNSQ…SVSSGSWDQS (112 aa)) are disordered. Positions 97–103 (REVNSQE) are UIM-linker. A necessary for interaction with NR6A1 N-terminus region spans residues 100–200 (NSQEEEEEEL…EEPVSVSSGS (101 aa)). Position 101 is a phosphoserine (Ser101). The UIM 2 domain occupies 105-124 (EEEELLRKAIAESLNSCRPS). Residues 117 to 130 (SLNSCRPSDASATR) show a composition bias toward polar residues. Phosphoserine is present on Ser140. The span at 194–204 (VSVSSGSWDQS) shows a compositional bias: low complexity. Ser205 is modified (phosphoserine). Residue Lys245 forms a Glycyl lysine isopeptide (Lys-Gly) (interchain with G-Cter in SUMO2) linkage. The segment at 270–400 (TGGTVNYFWG…EEEPTTSHGQ (131 aa)) is AIR. The disordered stretch occupies residues 334-369 (NECGQGEQASEKNEGISEDMGDEDKEERQESRASVW). The span at 349–358 (ISEDMGDEDK) shows a compositional bias: acidic residues. Residues Lys382 and Lys387 each participate in a glycyl lysine isopeptide (Lys-Gly) (interchain with G-Cter in SUMO2) cross-link. Residues 391-418 (EEEPTTSHGQSSQGLFVEETSEEGNSVP) are disordered. A necessary for interaction with NR6A1 C-terminus region spans residues 400 to 500 (QSSQGLFVEE…EIHTSTFSSS (101 aa)). 2 positions are modified to phosphoserine: Ser402 and Ser420. Residue Lys429 forms a Glycyl lysine isopeptide (Lys-Gly) (interchain with G-Cter in SUMO2) linkage. A Phosphoserine modification is found at Ser467. Residues 502–529 (QVSCPLCDQGFPPTKIERHAMYCNGLMG) form a UBZ4-type zinc finger. Zn(2+) is bound by residues Cys505, Cys508, His520, and Cys524. The zinc-finger-like region stretch occupies residues 505 to 582 (CPLCDQGFPP…REYQCHVESC (78 aa)). Residues Lys544, Lys559, Lys562, and Lys607 each participate in a glycyl lysine isopeptide (Lys-Gly) (interchain with G-Cter in SUMO2) cross-link. Ser627 carries the phosphoserine modification. Residues Lys635 and Lys642 each participate in a glycyl lysine isopeptide (Lys-Gly) (interchain with G-Cter in SUMO2) cross-link. A phosphoserine mark is found at Ser655 and Ser679. Glycyl lysine isopeptide (Lys-Gly) (interchain with G-Cter in SUMO2) cross-links involve residues Lys698 and Lys699.

Belongs to the RAP80 family. As to quaternary structure, component of the ARISC complex, at least composed of UIMC1/RAP80, ABRAXAS1, BRCC3/BRCC36, BABAM2 and BABAM1/NBA1. Component of the BRCA1-A complex, at least composed of the BRCA1, BARD1, UIMC1/RAP80, ABRAXAS1, BRCC3/BRCC36, BABAM2 and BABAM1/NBA1. In the BRCA1-A complex, interacts directly with ABRAXAS1. Interacts with UBE2I. Interacts with NR6A1. Interacts with ESR1. Interacts with TSP57. Interacts with TRAIP. In terms of processing, sumoylated. Phosphorylated upon DNA damage by ATM or ATR.

It localises to the nucleus. Its function is as follows. Ubiquitin-binding protein. Specifically recognizes and binds 'Lys-63'-linked ubiquitin. Plays a central role in the BRCA1-A complex by specifically binding 'Lys-63'-linked ubiquitinated histones H2A and H2AX at DNA lesions sites, leading to target the BRCA1-BARD1 heterodimer to sites of DNA damage at double-strand breaks (DSBs). The BRCA1-A complex also possesses deubiquitinase activity that specifically removes 'Lys-63'-linked ubiquitin on histones H2A and H2AX. Also weakly binds monoubiquitin but with much less affinity than 'Lys-63'-linked ubiquitin. May interact with monoubiquitinated histones H2A and H2B; the relevance of such results is however unclear in vivo. Does not bind Lys-48'-linked ubiquitin. May indirectly act as a transcriptional repressor by inhibiting the interaction of NR6A1 with the corepressor NCOR1. This is BRCA1-A complex subunit RAP80 (UIMC1) from Sus scrofa (Pig).